A 144-amino-acid polypeptide reads, in one-letter code: Ig heavy chain V region M167 (144 aa).

The first 19 residues, 1-19 (MKMWLNWVFLLTLLHGIQC), serve as a signal peptide directing secretion. An Ig-like domain is found at 20–133 (EVKVVESGGG…GNSYFGYFDV (114 aa)).

The polypeptide is Ig heavy chain V region M167 (Mus musculus (Mouse)).